The chain runs to 438 residues: Glutaryl-CoA dehydrogenase, mitochondrial (438 aa).

The transit peptide at 1-44 directs the protein to the mitochondrion; sequence MALRGVSVRLLSRGPGLHVLRTWVSSAAQTEKGGRTQSQLAKSS. Substrate-binding positions include 138–139 and serine 186; that span reads RS. Residues 177–186 and 212–214 each bind FAD; these read FGLTEPNSGS and WIT. Lysine 240 bears the N6-acetyllysine mark. 287-294 provides a ligand contact to substrate; it reads FGCLNNAR. Residues arginine 319, glutamine 330, and 387–391 contribute to the FAD site; that span reads DMLGG. Catalysis depends on glutamate 414, which acts as the Proton acceptor. Glycine 415 is a binding site for substrate. FAD is bound by residues 416 to 418 and phenylalanine 434; that span reads THD.

This sequence belongs to the acyl-CoA dehydrogenase family. As to quaternary structure, homotetramer. FAD is required as a cofactor. In terms of tissue distribution, isoform Long and isoform Short are expressed in fibroblasts and liver.

It localises to the mitochondrion matrix. It catalyses the reaction glutaryl-CoA + oxidized [electron-transfer flavoprotein] + 2 H(+) = (2E)-butenoyl-CoA + reduced [electron-transfer flavoprotein] + CO2. The protein operates within amino-acid metabolism; lysine degradation. It functions in the pathway amino-acid metabolism; tryptophan metabolism. Strongly inhibited by MCPA-CoA, a metabolite of hypoglycin which is present in unripened fruit of the ackee tree. Catalyzes the oxidative decarboxylation of glutaryl-CoA to crotonyl-CoA and CO(2) in the degradative pathway of L-lysine, L-hydroxylysine, and L-tryptophan metabolism. It uses electron transfer flavoprotein as its electron acceptor. Isoform Short is inactive. The chain is Glutaryl-CoA dehydrogenase, mitochondrial (GCDH) from Homo sapiens (Human).